A 615-amino-acid chain; its full sequence is UvrABC system protein C (615 aa).

The 78-residue stretch at 14 to 91 (TSPGCYIHKD…IKENKPKYNI (78 aa)) folds into the GIY-YIG domain. The region spanning 196-231 (NKIIDELKGKMAAAAQTMEFERAAEYRDLIQAIGTL) is the UVR domain.

It belongs to the UvrC family. Interacts with UvrB in an incision complex.

The protein localises to the cytoplasm. In terms of biological role, the UvrABC repair system catalyzes the recognition and processing of DNA lesions. UvrC both incises the 5' and 3' sides of the lesion. The N-terminal half is responsible for the 3' incision and the C-terminal half is responsible for the 5' incision. This Streptococcus pneumoniae (strain JJA) protein is UvrABC system protein C.